Reading from the N-terminus, the 101-residue chain is Small ribosomal subunit protein uS14 (101 aa).

The protein belongs to the universal ribosomal protein uS14 family. In terms of assembly, part of the 30S ribosomal subunit. Contacts proteins S3 and S10.

Functionally, binds 16S rRNA, required for the assembly of 30S particles and may also be responsible for determining the conformation of the 16S rRNA at the A site. The chain is Small ribosomal subunit protein uS14 from Buchnera aphidicola subsp. Schizaphis graminum (strain Sg).